A 187-amino-acid chain; its full sequence is dCTP deaminase (187 aa).

Residues 107–112 (KSTYAR), 131–133 (TLE), glutamine 152, tyrosine 166, lysine 175, and glutamine 176 contribute to the dCTP site. The Proton donor/acceptor role is filled by glutamate 133.

It belongs to the dCTP deaminase family. Homotrimer.

It catalyses the reaction dCTP + H2O + H(+) = dUTP + NH4(+). Its pathway is pyrimidine metabolism; dUMP biosynthesis; dUMP from dCTP (dUTP route): step 1/2. Catalyzes the deamination of dCTP to dUTP. This is dCTP deaminase from Ehrlichia canis (strain Jake).